A 681-amino-acid chain; its full sequence is Methionine--tRNA ligase (681 aa).

A 'HIGH' region motif is present at residues 14–24 (PYANGSIHLGH). Residues Cys-145, Cys-148, Cys-158, and Cys-161 each contribute to the Zn(2+) site. Positions 331–335 (KMSKS) match the 'KMSKS' region motif. An ATP-binding site is contributed by Lys-334. A tRNA-binding domain is found at 579–681 (AFAAVDLRIA…AGAKPGQRVH (103 aa)).

It belongs to the class-I aminoacyl-tRNA synthetase family. MetG type 1 subfamily. Homodimer. The cofactor is Zn(2+).

The protein resides in the cytoplasm. The catalysed reaction is tRNA(Met) + L-methionine + ATP = L-methionyl-tRNA(Met) + AMP + diphosphate. Its function is as follows. Is required not only for elongation of protein synthesis but also for the initiation of all mRNA translation through initiator tRNA(fMet) aminoacylation. This Azotobacter vinelandii (strain DJ / ATCC BAA-1303) protein is Methionine--tRNA ligase.